The chain runs to 313 residues: Homoserine O-succinyltransferase (313 aa).

C142 functions as the Acyl-thioester intermediate in the catalytic mechanism. Substrate-binding residues include K163 and S192. H235 acts as the Proton acceptor in catalysis. Residue E237 is part of the active site. R249 contributes to the substrate binding site.

The protein belongs to the MetA family.

Its subcellular location is the cytoplasm. The enzyme catalyses L-homoserine + succinyl-CoA = O-succinyl-L-homoserine + CoA. It functions in the pathway amino-acid biosynthesis; L-methionine biosynthesis via de novo pathway; O-succinyl-L-homoserine from L-homoserine: step 1/1. Its function is as follows. Transfers a succinyl group from succinyl-CoA to L-homoserine, forming succinyl-L-homoserine. The chain is Homoserine O-succinyltransferase from Vibrio vulnificus (strain CMCP6).